We begin with the raw amino-acid sequence, 164 residues long: UPF0201 protein MA_4659 (164 aa).

This sequence belongs to the UPF0201 family.

This chain is UPF0201 protein MA_4659, found in Methanosarcina acetivorans (strain ATCC 35395 / DSM 2834 / JCM 12185 / C2A).